The chain runs to 253 residues: 3-dehydroquinate dehydratase (253 aa).

Residues 46 to 48 and R82 contribute to the 3-dehydroquinate site; that span reads EWR. The Proton donor/acceptor role is filled by H143. The Schiff-base intermediate with substrate role is filled by K170. The 3-dehydroquinate site is built by R213, S232, and Q236.

It belongs to the type-I 3-dehydroquinase family. As to quaternary structure, homodimer.

It catalyses the reaction 3-dehydroquinate = 3-dehydroshikimate + H2O. It participates in metabolic intermediate biosynthesis; chorismate biosynthesis; chorismate from D-erythrose 4-phosphate and phosphoenolpyruvate: step 3/7. Its function is as follows. Involved in the third step of the chorismate pathway, which leads to the biosynthesis of aromatic amino acids. Catalyzes the cis-dehydration of 3-dehydroquinate (DHQ) and introduces the first double bond of the aromatic ring to yield 3-dehydroshikimate. The polypeptide is 3-dehydroquinate dehydratase (Syntrophotalea carbinolica (strain DSM 2380 / NBRC 103641 / GraBd1) (Pelobacter carbinolicus)).